Here is a 189-residue protein sequence, read N- to C-terminus: Protein CotJC (189 aa).

The protein belongs to the manganese catalase family.

Its function is as follows. The cotJ operon proteins affect spore coat composition. They are either required for the normal formation of the inner layers of the coat or are themselves structural components of the coat. In Bacillus subtilis (strain 168), this protein is Protein CotJC (cotJC).